Here is a 331-residue protein sequence, read N- to C-terminus: Ketol-acid reductoisomerase (NADP(+)) (331 aa).

The KARI N-terminal Rossmann domain maps to 2–182 (AQLFYDSDAD…GGTRAGILET (181 aa)). Residues 25–28 (YGSQ), S51, S53, and 83–86 (DEFQ) each bind NADP(+). Residue H108 is part of the active site. G134 provides a ligand contact to NADP(+). Positions 183–328 (NFKEETETDL…KGLRAMFSWL (146 aa)) constitute a KARI C-terminal knotted domain. Mg(2+)-binding residues include D191, E195, E227, and E231. S252 is a binding site for substrate.

The protein belongs to the ketol-acid reductoisomerase family. Mg(2+) serves as cofactor.

It carries out the reaction (2R)-2,3-dihydroxy-3-methylbutanoate + NADP(+) = (2S)-2-acetolactate + NADPH + H(+). The catalysed reaction is (2R,3R)-2,3-dihydroxy-3-methylpentanoate + NADP(+) = (S)-2-ethyl-2-hydroxy-3-oxobutanoate + NADPH + H(+). It functions in the pathway amino-acid biosynthesis; L-isoleucine biosynthesis; L-isoleucine from 2-oxobutanoate: step 2/4. Its pathway is amino-acid biosynthesis; L-valine biosynthesis; L-valine from pyruvate: step 2/4. In terms of biological role, involved in the biosynthesis of branched-chain amino acids (BCAA). Catalyzes an alkyl-migration followed by a ketol-acid reduction of (S)-2-acetolactate (S2AL) to yield (R)-2,3-dihydroxy-isovalerate. In the isomerase reaction, S2AL is rearranged via a Mg-dependent methyl migration to produce 3-hydroxy-3-methyl-2-ketobutyrate (HMKB). In the reductase reaction, this 2-ketoacid undergoes a metal-dependent reduction by NADPH to yield (R)-2,3-dihydroxy-isovalerate. The chain is Ketol-acid reductoisomerase (NADP(+)) from Prochlorococcus marinus (strain MIT 9303).